Here is a 318-residue protein sequence, read N- to C-terminus: Mediator of RNA polymerase II transcription subunit 3 (318 aa).

Residues 134–156 (SAAGITKTSSGNDGNTTGSTANT) show a composition bias toward polar residues. The segment at 134–225 (SAAGITKTSS…PSLKQIPNTQ (92 aa)) is disordered. A compositionally biased stretch (low complexity) spans 192-217 (HTGPATAPTTSNSAASAAAAAANTPS).

Belongs to the Mediator complex subunit 3 family. Component of the Mediator complex.

It is found in the nucleus. In terms of biological role, component of the Mediator complex, a coactivator involved in regulated gene transcription of nearly all RNA polymerase II-dependent genes. Mediator functions as a bridge to convey information from gene-specific regulatory proteins to the basal RNA polymerase II transcription machinery. Mediator is recruited to promoters by direct interactions with regulatory proteins and serves as a scaffold for the assembly of a functional preinitiation complex with RNA polymerase II and the general transcription factors. The sequence is that of Mediator of RNA polymerase II transcription subunit 3 (PGD1) from Kluyveromyces lactis (strain ATCC 8585 / CBS 2359 / DSM 70799 / NBRC 1267 / NRRL Y-1140 / WM37) (Yeast).